The primary structure comprises 111 residues: uncharacterized protein (111 aa).

This is an uncharacterized protein from Acanthamoeba polyphaga mimivirus (APMV).